The primary structure comprises 454 residues: MTQLSVVILAAGKGTRMYSDLPKVLHTVAGKPMVQHVIDTAKQIDAKQIHLIYGHGGELLQQRLSSEPVNWVLQAEQLGTGHAMQQAAPFFADDENILMLYGDAPLITKETLERLIAAKPENGIALLTVELENPTGYGRIIRENGSVVAIVEQKDANAEQLKIREVNTGVMVASGASFKKWLANLNNNNAQGEYYITDVIAMANQDGYKVQAVQASEFMEVEGANNRLQLAALERFYQKTQAEKLLLAGVRLIDQARFDIRGSLTHGKDVEIDVNVIIEGEVKLGNRVRIGAGCVLKNCEIGDDVEIKPYSVIEDAVVGKAAQIGPFSRLRPGANLAEETHVGNFVEIKNAQVGKGSKVNHLTYVGDAEVGSNCNIGAGVITCNYDGANKFKTIIGNNVFVGSDSQLVAPVTIADGATIGAGATVTKDVAENELVISRVPQRHIQGWQRPTKKK.

The pyrophosphorylase stretch occupies residues methionine 1–arginine 227. Residues leucine 9–glycine 12, lysine 23, glutamine 74, glycine 79–threonine 80, tyrosine 101–aspartate 103, glycine 138, glutamate 152, asparagine 167, and asparagine 225 contribute to the UDP-N-acetyl-alpha-D-glucosamine site. Aspartate 103 serves as a coordination point for Mg(2+). Asparagine 225 lines the Mg(2+) pocket. The tract at residues leucine 228–alanine 248 is linker. The segment at glycine 249–lysine 454 is N-acetyltransferase. UDP-N-acetyl-alpha-D-glucosamine-binding residues include arginine 331 and lysine 349. Residue histidine 361 is the Proton acceptor of the active site. UDP-N-acetyl-alpha-D-glucosamine contacts are provided by tyrosine 364 and asparagine 375. Acetyl-CoA-binding positions include alanine 378, asparagine 384–tyrosine 385, serine 403, alanine 421, and arginine 438.

In the N-terminal section; belongs to the N-acetylglucosamine-1-phosphate uridyltransferase family. The protein in the C-terminal section; belongs to the transferase hexapeptide repeat family. In terms of assembly, homotrimer. It depends on Mg(2+) as a cofactor.

It is found in the cytoplasm. The catalysed reaction is alpha-D-glucosamine 1-phosphate + acetyl-CoA = N-acetyl-alpha-D-glucosamine 1-phosphate + CoA + H(+). It carries out the reaction N-acetyl-alpha-D-glucosamine 1-phosphate + UTP + H(+) = UDP-N-acetyl-alpha-D-glucosamine + diphosphate. The protein operates within nucleotide-sugar biosynthesis; UDP-N-acetyl-alpha-D-glucosamine biosynthesis; N-acetyl-alpha-D-glucosamine 1-phosphate from alpha-D-glucosamine 6-phosphate (route II): step 2/2. Its pathway is nucleotide-sugar biosynthesis; UDP-N-acetyl-alpha-D-glucosamine biosynthesis; UDP-N-acetyl-alpha-D-glucosamine from N-acetyl-alpha-D-glucosamine 1-phosphate: step 1/1. It participates in bacterial outer membrane biogenesis; LPS lipid A biosynthesis. Functionally, catalyzes the last two sequential reactions in the de novo biosynthetic pathway for UDP-N-acetylglucosamine (UDP-GlcNAc). The C-terminal domain catalyzes the transfer of acetyl group from acetyl coenzyme A to glucosamine-1-phosphate (GlcN-1-P) to produce N-acetylglucosamine-1-phosphate (GlcNAc-1-P), which is converted into UDP-GlcNAc by the transfer of uridine 5-monophosphate (from uridine 5-triphosphate), a reaction catalyzed by the N-terminal domain. In Actinobacillus pleuropneumoniae serotype 7 (strain AP76), this protein is Bifunctional protein GlmU.